A 137-amino-acid chain; its full sequence is Large ribosomal subunit protein mL41 (137 aa).

The N-terminal 13 residues, 1–13 (MGVLAAAARCLVR), are a transit peptide targeting the mitochondrion.

Belongs to the mitochondrion-specific ribosomal protein mL41 family. In terms of assembly, component of the mitochondrial large ribosomal subunit (mt-LSU). Mature mammalian 55S mitochondrial ribosomes consist of a small (28S) and a large (39S) subunit. The 28S small subunit contains a 12S ribosomal RNA (12S mt-rRNA) and 30 different proteins. The 39S large subunit contains a 16S rRNA (16S mt-rRNA), a copy of mitochondrial valine transfer RNA (mt-tRNA(Val)), which plays an integral structural role, and 52 different proteins. Interacts with BCL2. As to expression, present in kidney, liver, thymus and testis, and at lower level in brain and spleen (at protein level).

Its subcellular location is the mitochondrion. In terms of biological role, component of the mitochondrial ribosome large subunit. Also involved in apoptosis and cell cycle. Enhances p53/TP53 stability, thereby contributing to p53/TP53-induced apoptosis in response to growth-inhibitory condition. Enhances p53/TP53 translocation to the mitochondria. Has the ability to arrest the cell cycle at the G1 phase, possibly by stabilizing the CDKN1A and CDKN1B (p27Kip1) proteins. The protein is Large ribosomal subunit protein mL41 (MRPL41) of Homo sapiens (Human).